Consider the following 584-residue polypeptide: PE-PGRS family protein PE_PGRS11 (584 aa).

One can recognise a PE domain in the interval 1-92 (MSFVIVARDA…AATSYAVTEV (92 aa)). Catalysis depends on H290, which acts as the Tele-phosphohistidine intermediate. The active-site Proton donor/acceptor is the E365. The interval 384–584 (YLVGPIAWTL…LPIGLPSLIP (201 aa)) is phosphoglycerate mutase.

The protein in the N-terminal section; belongs to the mycobacterial PE family. PGRS subfamily. In the C-terminal section; belongs to the phosphoglycerate mutase family. As to quaternary structure, interacts with human TLR2. Mg(2+) is required as a cofactor.

The protein resides in the secreted. The protein localises to the cell wall. It is found in the cell surface. The catalysed reaction is (2R)-2-phosphoglycerate = (2R)-3-phosphoglycerate. Its function is as follows. Induces maturation and activation of human dendritic cells (DCs), via TLR2-dependent activation of ERK1/2, p38 MAPK, and NF-kappa-B signaling pathways, and enhances the ability of DCs to stimulate CD4(+) T cells. By activating DCs, could potentially contribute to the initiation of innate immune responses during tuberculosis infection and hence regulate the clinical course of tuberculosis. Involved in resistance to oxidative stress, via TLR2-dependent activation of the PI3K-ERK1/2-NF-kappa-B signaling pathway and expression of COX-2 and Bcl2. Also abolishes H(2)O(2)-triggered activation of p38 MAPK. This chain is PE-PGRS family protein PE_PGRS11, found in Mycobacterium tuberculosis (strain ATCC 25618 / H37Rv).